The chain runs to 88 residues: Small ribosomal subunit protein uS15 (88 aa).

The protein belongs to the universal ribosomal protein uS15 family. As to quaternary structure, part of the 30S ribosomal subunit. Forms a bridge to the 50S subunit in the 70S ribosome, contacting the 23S rRNA.

One of the primary rRNA binding proteins, it binds directly to 16S rRNA where it helps nucleate assembly of the platform of the 30S subunit by binding and bridging several RNA helices of the 16S rRNA. Its function is as follows. Forms an intersubunit bridge (bridge B4) with the 23S rRNA of the 50S subunit in the ribosome. The chain is Small ribosomal subunit protein uS15 from Caldicellulosiruptor saccharolyticus (strain ATCC 43494 / DSM 8903 / Tp8T 6331).